The sequence spans 82 residues: UPF0180 protein BAA_1480 (82 aa).

This sequence belongs to the UPF0180 family.

The protein is UPF0180 protein BAA_1480 of Bacillus anthracis (strain A0248).